A 395-amino-acid polypeptide reads, in one-letter code: MNSFSHVPPGFRFHPTDEELVDYYLRKKVASKRIEIDFIKDIDLYKIEPWDLQELCKIGHEEQSDWYFFSHKDKKYPTGTRTNRATKAGFWKATGRDKAIYLRHSLIGMRKTLVFYKGRAPNGQKSDWIMHEYRLETDENGTPQEEGWVVCRVFKKRLAAVRRMGDYDSSPSHWYDDQLSFMASELETNGQRRILPNHHQQQQHEHQQHMPYGLNASAYALNNPNLQCKQELELHYNHLVQRNHLLDESHLSFLQLPQLESPKIQQDNSNCNSLPYGTSNIDNNSSHNANLQQSNIAHEEQLNQGNQNFSSLYMNSGNEQVMDQVTDWRVLDKFVASQLSNEEAATASASIQNNAKDTSNAEYQVDEEKDPKRASDMGEEYTASTSSSCQIDLWK.

The 150-residue stretch at 7–156 folds into the NAC domain; sequence VPPGFRFHPT…GWVVCRVFKK (150 aa). The DNA-binding element occupies 107–162; sequence IGMRKTLVFYKGRAPNGQKSDWIMHEYRLETDENGTPQEEGWVVCRVFKKRLAAVR. Polar residues-rich tracts occupy residues 344–362 and 382–395; these read AATA…SNAE and TAST…DLWK. Residues 344–395 are disordered; that stretch reads AATASASIQNNAKDTSNAEYQVDEEKDPKRASDMGEEYTASTSSSCQIDLWK.

It belongs to the plant vascular related NAC-domain protein family. As to quaternary structure, interacts with NAC083/VNI2. In terms of tissue distribution, expressed in root, shoot and hypocotyl vascular elements, columella root caps, epidermal and cortex root cells and root-hypocotyl junctions. Observed predominantly in root imature xylem vessels. Present in root developing xylems. Specifically expressed in vessels in the secondary xylem of the root-hypocotyl region, and in vessels but not in interfascicular fibers in stems.

It is found in the nucleus. Transcription activator that binds to the secondary wall NAC binding element (SNBE), 5'-(T/A)NN(C/T)(T/C/G)TNNNNNNNA(A/C)GN(A/C/T)(A/T)-3', in the promoter of target genes. Involved in xylem formation by promoting the expression of secondary wall-associated transcription factors and of genes involved in secondary wall biosynthesis and programmed cell death, genes driven by the secondary wall NAC binding element (SNBE). Triggers thickening of secondary walls. The chain is NAC domain-containing protein 7 from Arabidopsis thaliana (Mouse-ear cress).